The sequence spans 458 residues: Chondroitin hydrolase (458 aa).

The N-terminal stretch at 1-22 is a signal peptide; sequence MVIVWYHQLLLVLLIFIGAAKG. In terms of domain architecture, EGF-like spans 358–401; it reads NLDKCRMERCEGRGECYLPRPKTNPAIYNFACRCERPYFGKSCE. 3 disulfides stabilise this stretch: cysteine 362–cysteine 373, cysteine 367–cysteine 389, and cysteine 391–cysteine 400.

It belongs to the glycosyl hydrolase 56 family.

In terms of biological role, endo-beta-galactosaminidase that specifically hydrolyzes chondroitin, releasing GlcUA-beta-(1-&gt;3)-GalNAc-beta-(1-&gt;4)-GlcUA-beta-(1-&gt;3)-GalNAc as the main product. Also hydrolyzes to a lesser extent chondroitin sulfates (CS-A, CS-C) and hyaluronic acid. May regulate the function of chondroitin in cell division. This is Chondroitin hydrolase from Caenorhabditis elegans.